A 547-amino-acid polypeptide reads, in one-letter code: Kelch repeat and BTB domain-containing protein 2 (547 aa).

A BTB domain is found at 20–89; it reads CDVIITIGDG…LYNRHISSMN (70 aa). Kelch repeat units lie at residues 295–342, 343–389, and 391–454; these read DIII…VIDD, TIYA…VLDQ, and IYII…SHKD.

In terms of assembly, interacts (via BTB domain) with host CUL3.

Its subcellular location is the host cytoplasm. In terms of biological role, probable substrate-specific adapter of CUL3-containing E3 ubiquitin-protein ligases which mediate the ubiquitination and subsequent proteasomal degradation of host target proteins. In Bos taurus (Bovine), this protein is Kelch repeat and BTB domain-containing protein 2 (KBTB2).